The following is a 945-amino-acid chain: Probable inorganic carbon transporter subunit DabA (945 aa).

The Zn(2+) site is built by Cys-408, Asp-410, His-651, and Cys-666.

Belongs to the inorganic carbon transporter (TC 9.A.2) DabA family. In terms of assembly, forms a complex with DabB. It depends on Zn(2+) as a cofactor.

Its subcellular location is the cell inner membrane. Functionally, part of an energy-coupled inorganic carbon pump. In Sulfurihydrogenibium azorense (strain DSM 15241 / OCM 825 / Az-Fu1), this protein is Probable inorganic carbon transporter subunit DabA.